Reading from the N-terminus, the 128-residue chain is 3-aminoacrylate deaminase RutC (128 aa).

It belongs to the RutC family. As to quaternary structure, homotrimer.

It catalyses the reaction (Z)-3-aminoacrylate + H2O + H(+) = 3-oxopropanoate + NH4(+). In terms of biological role, involved in pyrimidine catabolism. Catalyzes the deamination of 3-aminoacrylate to malonic semialdehyde, a reaction that can also occur spontaneously. RutC may facilitate the reaction and modulate the metabolic fitness, rather than catalyzing essential functions. The sequence is that of 3-aminoacrylate deaminase RutC from Escherichia coli O103:H2 (strain 12009 / EHEC).